Reading from the N-terminus, the 239-residue chain is Mannose-P-dolichol utilization defect 1 protein homolog 1 (239 aa).

The next 6 helical transmembrane spans lie at 25–45 (CLLP…SMTV), 62–82 (LSVV…AYCL), 91–111 (FGEL…IYYF), 123–143 (AILY…PFLF), 174–194 (LSFL…FTSI), and 202–222 (MLLG…QILL). One can recognise a PQ-loop 1 domain in the interval 27–93 (LPLISKLLGY…KDLPFSAFGE (67 aa)). Residues 150 to 205 (KHLIFLSARIPQIWKNFRNKSTGQLSFLTCLMNFGGALARVFTSIQEKAPLSMLLG) form the PQ-loop 2 domain.

Belongs to the MPDU1 (TC 2.A.43.3) family.

The protein resides in the membrane. The polypeptide is Mannose-P-dolichol utilization defect 1 protein homolog 1 (Arabidopsis thaliana (Mouse-ear cress)).